The sequence spans 564 residues: NAD-dependent malic enzyme (564 aa).

Tyrosine 102 serves as the catalytic Proton donor. An NAD(+)-binding site is contributed by arginine 155. Lysine 173 (proton acceptor) is an active-site residue. A divalent metal cation contacts are provided by glutamate 244, aspartate 245, and aspartate 268. Residues aspartate 268 and asparagine 417 each contribute to the NAD(+) site.

The protein belongs to the malic enzymes family. In terms of assembly, homotetramer. Mg(2+) is required as a cofactor. Mn(2+) serves as cofactor.

It carries out the reaction (S)-malate + NAD(+) = pyruvate + CO2 + NADH. The catalysed reaction is oxaloacetate + H(+) = pyruvate + CO2. The polypeptide is NAD-dependent malic enzyme (Pseudomonas aeruginosa (strain ATCC 15692 / DSM 22644 / CIP 104116 / JCM 14847 / LMG 12228 / 1C / PRS 101 / PAO1)).